The sequence spans 405 residues: MDTLVEDDICILNHEKAHRREAVTPLSAYPGDESVASHFALVTAYEDIKKRLKDSEKENSFLKKRIRALEERLVGARADEETSSVGREQVNKAYHAYREVCIDRDNLKNQLEKINKDNSESLKMLNEQLQSKEVELLQLRTEVETQQVMRNLNPPSSSWEVEKLSCDLKIHGLEQELGLLRKECSDLRTELQKARQTGPPQEDILQGRDVIRPSLSREEHVPHQGLHHSDNMQHAYWELKREMSNLHLVTQVQAELLRKLKTSAAVKKACTPVGCVEDLGRDSTKLHLTNFTATYKRHPSLSPNGKAPCYAPSSPLPGDRKVFSDKAVLQSWTDNERLVPNDGADFPEHSSYGRNSLEDNSWVFPSPPKSSETAFGENKSKILPLSNLPPLHYLDQQNQNCLYKS.

The tract at residues 1 to 198 (MDTLVEDDIC…TELQKARQTG (198 aa)) is homodimerization. A coiled-coil region spans residues 40–197 (ALVTAYEDIK…RTELQKARQT (158 aa)). The segment at 229 to 270 (SDNMQHAYWELKREMSNLHLVTQVQAELLRKLKTSAAVKKAC) is interaction with TBK1 and IKBKE. Residues S331 and S366 each carry the phosphoserine modification. Positions 357 to 377 (LEDNSWVFPSPPKSSETAFGE) are disordered.

As to quaternary structure, homodimer. Interacts with IKBKE and TBK1. Interacts with TICAM1. Interacts with TAX1BP1. Interacts with CALCOCO2. In terms of processing, ubiquitinated via 'Lys-48'-linked polyubiquitination by TRIM38, leading to its degradation. As to expression, testis, ovary, heart, lung, kidney and brain. Expressed mainly in the spermatocytes or spermatids in the testis.

The protein localises to the cytoplasm. Adapter protein which binds TBK1 and IKBKE playing a role in antiviral innate immunity. Activates serine/threonine-protein kinase TBK1 and facilitates its oligomerization. Enhances the phosphorylation of NF-kappa-B p65 subunit RELA by TBK1. Promotes TBK1-induced as well as TNF-alpha or PMA-induced activation of NF-kappa-B. Participates in IFNB promoter activation via TICAM1. The polypeptide is 5-azacytidine-induced protein 2 (Azi2) (Mus musculus (Mouse)).